The sequence spans 684 residues: Histamine oxidase (684 aa).

Residue 316-327 (YFDSGEYLVGRD) participates in substrate binding. Residue aspartate 318 is the Proton acceptor of the active site. Cysteines 337 and 363 form a disulfide. Residue 399-404 (VGNYDY) participates in substrate binding. Tyrosine 402 acts as the Schiff-base intermediate with substrate; via topaquinone in catalysis. A 2',4',5'-topaquinone modification is found at tyrosine 402. Cu cation contacts are provided by histidine 451 and histidine 453. Ca(2+)-binding residues include aspartate 460, glutamate 500, tyrosine 590, and aspartate 601. Aspartate 460 provides a ligand contact to Mn(2+). Aspartate 601 lines the Mn(2+) pocket. Histidine 612 provides a ligand contact to Cu cation. Positions 647–684 (SSAAGHCGTGSEREHAAPGGTAVGHSGPDTGGQGHCGH) are disordered. A compositionally biased stretch (gly residues) spans 675–684 (DTGGQGHCGH).

Belongs to the copper/topaquinone oxidase family. As to quaternary structure, homodimer. Requires Cu cation as cofactor. Zn(2+) is required as a cofactor. Ca(2+) serves as cofactor. The cofactor is L-topaquinone. It depends on Mn(2+) as a cofactor. Post-translationally, topaquinone (TPQ) is generated by copper-dependent autoxidation of a specific tyrosyl residue.

The protein localises to the cytoplasm. The catalysed reaction is a primary methyl amine + O2 + H2O = an aldehyde + H2O2 + NH4(+). The enzyme catalyses histamine + O2 + H2O = imidazole-4-acetaldehyde + H2O2 + NH4(+). In terms of biological role, oxidizes histamine. Other amines including phenethylamine, tyramine, tryptamine, putrescine, and benzylamine also serve as substrate. The protein is Histamine oxidase of Arthrobacter globiformis.